Here is a 361-residue protein sequence, read N- to C-terminus: UDP-N-acetylglucosamine--N-acetylmuramyl-(pentapeptide) pyrophosphoryl-undecaprenol N-acetylglucosamine transferase (361 aa).

UDP-N-acetyl-alpha-D-glucosamine contacts are provided by residues 11 to 13 (TGG), N124, R162, S193, and Q292.

Belongs to the glycosyltransferase 28 family. MurG subfamily.

The protein localises to the cell inner membrane. It catalyses the reaction di-trans,octa-cis-undecaprenyl diphospho-N-acetyl-alpha-D-muramoyl-L-alanyl-D-glutamyl-meso-2,6-diaminopimeloyl-D-alanyl-D-alanine + UDP-N-acetyl-alpha-D-glucosamine = di-trans,octa-cis-undecaprenyl diphospho-[N-acetyl-alpha-D-glucosaminyl-(1-&gt;4)]-N-acetyl-alpha-D-muramoyl-L-alanyl-D-glutamyl-meso-2,6-diaminopimeloyl-D-alanyl-D-alanine + UDP + H(+). The protein operates within cell wall biogenesis; peptidoglycan biosynthesis. Cell wall formation. Catalyzes the transfer of a GlcNAc subunit on undecaprenyl-pyrophosphoryl-MurNAc-pentapeptide (lipid intermediate I) to form undecaprenyl-pyrophosphoryl-MurNAc-(pentapeptide)GlcNAc (lipid intermediate II). In Elusimicrobium minutum (strain Pei191), this protein is UDP-N-acetylglucosamine--N-acetylmuramyl-(pentapeptide) pyrophosphoryl-undecaprenol N-acetylglucosamine transferase.